Here is a 275-residue protein sequence, read N- to C-terminus: NH(3)-dependent NAD(+) synthetase (275 aa).

46–53 (GISGGQDS) serves as a coordination point for ATP. Asp-52 provides a ligand contact to Mg(2+). Arg-140 lines the deamido-NAD(+) pocket. Position 160 (Thr-160) interacts with ATP. Mg(2+) is bound at residue Glu-165. Deamido-NAD(+) is bound by residues Lys-173 and Asp-180. ATP is bound by residues Lys-189 and Thr-211. Residue 260–261 (HK) coordinates deamido-NAD(+).

The protein belongs to the NAD synthetase family. As to quaternary structure, homodimer.

The enzyme catalyses deamido-NAD(+) + NH4(+) + ATP = AMP + diphosphate + NAD(+) + H(+). The protein operates within cofactor biosynthesis; NAD(+) biosynthesis; NAD(+) from deamido-NAD(+) (ammonia route): step 1/1. Catalyzes the ATP-dependent amidation of deamido-NAD to form NAD. Uses ammonia as a nitrogen source. The sequence is that of NH(3)-dependent NAD(+) synthetase from Cronobacter sakazakii (strain ATCC BAA-894) (Enterobacter sakazakii).